The following is a 223-amino-acid chain: Charged multivesicular body protein 3 (223 aa).

The N-myristoyl glycine moiety is linked to residue G2. The intramolecular interaction with C-terminus stretch occupies residues 2–113; it reads GLFGKTQEKP…LQKSTEVMKA (112 aa). The stretch at 22-54 forms a coiled coil; it reads KIRKEMRVVDRQIRDIQREEEKVKRSVKDAAKK. Important for autoinhibitory function regions lie at residues 59–64 and 168–169; these read VCVVLA and IL. The stretch at 149–223 forms a coiled coil; the sequence is ESMDDQEEME…MQSRLATLRS (75 aa). The segment at 151–221 is intramolecular interaction with N-terminus; that stretch reads MDDQEEMEEA…EAMQSRLATL (71 aa). Residues 151–223 are interaction with VPS4A; sequence MDDQEEMEEA…MQSRLATLRS (73 aa). K179 participates in a covalent cross-link: Glycyl lysine isopeptide (Lys-Gly) (interchain with G-Cter in ubiquitin). The segment at 180–223 is disordered; it reads APSKVTDALPEPEPAGAMAASEGDEEDDEEDLEAMQSRLATLRS. Interaction with STAMBP stretches follow at residues 196-223, 204-208, and 222-223; these read AMAA…TLRS, EEDDE, and RS. A Phosphoserine modification is found at S200. Positions 201–212 match the MIT-interacting motif motif; sequence EGDEEDDEEDLE. Positions 201–212 are enriched in acidic residues; the sequence is EGDEEDDEEDLE.

The protein belongs to the SNF7 family. Probable core component of the endosomal sorting required for transport complex III (ESCRT-III). ESCRT-III components are thought to multimerize to form a flat lattice on the perimeter membrane of the endosome. Several assembly forms of ESCRT-III may exist that interact and act sequentially. Forms a metastable monomer in solution; its core structure (without part of the putative autoinhibitory C-terminal acidic region) oligomerizes into a flat lattice via two different dimerization interfaces. In vitro, heteromerizes with CHMP2A (but not CHMP4) to form helical tubular structures that expose membrane-interacting sites on the outside whereas VPS4B can associate on the inside of the tubule. May interact with IGFBP7; the relevance of such interaction however remains unclear. Interacts with CHMP2A. Interacts with CHMP4A; the interaction requires the release of CHMP4A autoinhibition. Interacts with VPS4A. Interacts with STAMBP; the interaction appears to relieve the autoinhibition of CHMP3. Interacts with VTA1.

It localises to the cytoplasm. The protein localises to the cytosol. Its subcellular location is the membrane. The protein resides in the endosome. It is found in the late endosome membrane. Functionally, probable core component of the endosomal sorting required for transport complex III (ESCRT-III) which is involved in multivesicular bodies (MVBs) formation and sorting of endosomal cargo proteins into MVBs. MVBs contain intraluminal vesicles (ILVs) that are generated by invagination and scission from the limiting membrane of the endosome and mostly are delivered to lysosomes enabling degradation of membrane proteins, such as stimulated growth factor receptors, lysosomal enzymes and lipids. The MVB pathway appears to require the sequential function of ESCRT-O, -I,-II and -III complexes. ESCRT-III proteins mostly dissociate from the invaginating membrane before the ILV is released. The ESCRT machinery also functions in topologically equivalent membrane fission events, such as the terminal stages of cytokinesis. ESCRT-III proteins are believed to mediate the necessary vesicle extrusion and/or membrane fission activities, possibly in conjunction with the AAA ATPase VPS4. Selectively binds to phosphatidylinositol 3,5-bisphosphate PtdIns(3,5)P2 and PtdIns(3,4)P2 in preference to other phosphoinositides tested. Involved in late stages of cytokinesis. Plays a role in endosomal sorting/trafficking of EGF receptor. The polypeptide is Charged multivesicular body protein 3 (Chmp3) (Rattus norvegicus (Rat)).